Reading from the N-terminus, the 651-residue chain is Protein EXECUTER 2, chloroplastic (651 aa).

The transit peptide at 1 to 69 (MATTQPCLIG…KAPSLSCLRN (69 aa)) directs the protein to the chloroplast. Residues 103 to 138 (ESVVSLLKSQLEDAVEKEDFEEAVKLKQAISEATVD) form the UVR domain. The segment at 330–359 (DATEELVGEGTEETNSSDDEEEVEEEENDS) is disordered.

It localises to the plastid. Its subcellular location is the chloroplast. In terms of biological role, together with EX1, enables higher plants to perceive singlet oxygen as a stress signal in plastid that activates a genetically determined nuclear stress response program which triggers a programmed cell death (PCD). This transfer of singlet oxygen-induced stress-related signals from the plastid to the nucleus that triggers genetically controlled PCD pathway is unique to photosynthetic eukaryotes and operates under mild stress conditions, impeding photosystem II (PSII) without causing photooxidative damage of the plant. This is Protein EXECUTER 2, chloroplastic from Arabidopsis thaliana (Mouse-ear cress).